The following is a 217-amino-acid chain: tRNA (guanine-N(7)-)-methyltransferase (217 aa).

S-adenosyl-L-methionine contacts are provided by E44, E69, D96, and D118. Residue D118 is part of the active site. Substrate contacts are provided by residues K122, D154, and 191–194 (TEYE).

This sequence belongs to the class I-like SAM-binding methyltransferase superfamily. TrmB family.

It carries out the reaction guanosine(46) in tRNA + S-adenosyl-L-methionine = N(7)-methylguanosine(46) in tRNA + S-adenosyl-L-homocysteine. It participates in tRNA modification; N(7)-methylguanine-tRNA biosynthesis. Catalyzes the formation of N(7)-methylguanine at position 46 (m7G46) in tRNA. The sequence is that of tRNA (guanine-N(7)-)-methyltransferase from Bacillus thuringiensis (strain Al Hakam).